A 275-amino-acid polypeptide reads, in one-letter code: NH(3)-dependent NAD(+) synthetase (275 aa).

ATP is bound at residue 46–53 (GISGGQDS). A Mg(2+)-binding site is contributed by Asp-52. Arg-140 contributes to the deamido-NAD(+) binding site. Residue Thr-160 participates in ATP binding. Glu-165 provides a ligand contact to Mg(2+). Deamido-NAD(+)-binding residues include Lys-173 and Asp-180. 2 residues coordinate ATP: Lys-189 and Thr-211. 260–261 (HK) contributes to the deamido-NAD(+) binding site.

It belongs to the NAD synthetase family. In terms of assembly, homodimer.

It catalyses the reaction deamido-NAD(+) + NH4(+) + ATP = AMP + diphosphate + NAD(+) + H(+). It participates in cofactor biosynthesis; NAD(+) biosynthesis; NAD(+) from deamido-NAD(+) (ammonia route): step 1/1. Its function is as follows. Catalyzes the ATP-dependent amidation of deamido-NAD to form NAD. Uses ammonia as a nitrogen source. The chain is NH(3)-dependent NAD(+) synthetase from Escherichia coli O45:K1 (strain S88 / ExPEC).